Here is a 509-residue protein sequence, read N- to C-terminus: Proton-gated ion channel subunit pbo-5 (509 aa).

A signal peptide spans 1–21 (MTRLSILQHLLTFLILSKINA). At 22 to 275 (TSTTESYFDS…ISLKRRPLFY (254 aa)) the chain is on the extracellular side. An intrachain disulfide couples Cys-193 to Cys-207. The next 3 membrane-spanning stretches (helical) occupy residues 276–296 (MVTL…GLFA), 310–330 (LGVT…EKVP), and 336–356 (VPLL…AAMT). At 357–487 (TGIVMKVHRL…GYVRISERLD (131 aa)) the chain is on the cytoplasmic side. Residues 488–508 (ILFMFLFLSTVTIPVAVLFYL) form a helical membrane-spanning segment.

This sequence belongs to the ligand-gated ion channel (TC 1.A.9) family. Acetylcholine receptor (TC 1.A.9.1) subfamily. In terms of assembly, the functional channel is a heterooligomer of pbo-5 and pbo-6. May self-associate to form homooligomers with negligible ion channel activity. Expressed in the posterior body muscles. Also detected in the RIFL, RIFR and RIS head neurons.

The protein resides in the membrane. Forms a proton-gated ion channel with pbo-6 that is activated by acidification of the posterior coelomic space, leading to posterior body wall muscle contraction (pBoc) during the defecation cycle. Probably by regulating the defecation motor program, required for fatty acid uptake by intestinal cells. Does not bind neurotransmitters such as acetylcholine, gamma-aminobutyric acid, glycine, serotonin, glutamate or choline. This Caenorhabditis elegans protein is Proton-gated ion channel subunit pbo-5.